A 453-amino-acid chain; its full sequence is Bifunctional protein GlmU (453 aa).

Positions 1 to 227 (MAVSVIILAA…SIEVMGVNDR (227 aa)) are pyrophosphorylase. UDP-N-acetyl-alpha-D-glucosamine is bound by residues 8 to 11 (LAAG), Lys-22, Gln-73, 78 to 79 (GT), 100 to 102 (SGD), Gly-137, Glu-152, Asn-167, and Asn-225. Mg(2+) is bound at residue Asp-102. Asn-225 lines the Mg(2+) pocket. A linker region spans residues 228 to 248 (QQLAYLERFYQKREAARLMGE). Residues 249–453 (GVSLSDPDRF…WPGWKRPSKK (205 aa)) are N-acetyltransferase. Residues Arg-331 and Lys-349 each contribute to the UDP-N-acetyl-alpha-D-glucosamine site. His-361 functions as the Proton acceptor in the catalytic mechanism. Positions 364 and 375 each coordinate UDP-N-acetyl-alpha-D-glucosamine. Residues Ala-378, 384–385 (NY), Ser-403, Ala-421, and Arg-438 contribute to the acetyl-CoA site. A disordered region spans residues 430-453 (PPGELTLSRTPQKSWPGWKRPSKK).

It in the N-terminal section; belongs to the N-acetylglucosamine-1-phosphate uridyltransferase family. The protein in the C-terminal section; belongs to the transferase hexapeptide repeat family. As to quaternary structure, homotrimer. Mg(2+) is required as a cofactor.

Its subcellular location is the cytoplasm. It catalyses the reaction alpha-D-glucosamine 1-phosphate + acetyl-CoA = N-acetyl-alpha-D-glucosamine 1-phosphate + CoA + H(+). The enzyme catalyses N-acetyl-alpha-D-glucosamine 1-phosphate + UTP + H(+) = UDP-N-acetyl-alpha-D-glucosamine + diphosphate. It functions in the pathway nucleotide-sugar biosynthesis; UDP-N-acetyl-alpha-D-glucosamine biosynthesis; N-acetyl-alpha-D-glucosamine 1-phosphate from alpha-D-glucosamine 6-phosphate (route II): step 2/2. It participates in nucleotide-sugar biosynthesis; UDP-N-acetyl-alpha-D-glucosamine biosynthesis; UDP-N-acetyl-alpha-D-glucosamine from N-acetyl-alpha-D-glucosamine 1-phosphate: step 1/1. The protein operates within bacterial outer membrane biogenesis; LPS lipid A biosynthesis. In terms of biological role, catalyzes the last two sequential reactions in the de novo biosynthetic pathway for UDP-N-acetylglucosamine (UDP-GlcNAc). The C-terminal domain catalyzes the transfer of acetyl group from acetyl coenzyme A to glucosamine-1-phosphate (GlcN-1-P) to produce N-acetylglucosamine-1-phosphate (GlcNAc-1-P), which is converted into UDP-GlcNAc by the transfer of uridine 5-monophosphate (from uridine 5-triphosphate), a reaction catalyzed by the N-terminal domain. The protein is Bifunctional protein GlmU of Nitrosococcus oceani (strain ATCC 19707 / BCRC 17464 / JCM 30415 / NCIMB 11848 / C-107).